A 434-amino-acid chain; its full sequence is Adenylosuccinate synthetase (434 aa).

Residues 22–28 (GDEGKGK) and 50–52 (GHT) contribute to the GTP site. Catalysis depends on aspartate 23, which acts as the Proton acceptor. Mg(2+)-binding residues include aspartate 23 and glycine 50. IMP is bound by residues 23–26 (DEGK), 48–51 (NAGH), threonine 139, arginine 153, glutamine 234, threonine 249, and arginine 313. Residue histidine 51 is the Proton donor of the active site. Residue 309–315 (ATTGRKR) coordinates substrate. Residues arginine 315, 341–343 (KLD), and 423–425 (SVG) each bind GTP.

The protein belongs to the adenylosuccinate synthetase family. As to quaternary structure, homodimer. Mg(2+) serves as cofactor.

It is found in the cytoplasm. The enzyme catalyses IMP + L-aspartate + GTP = N(6)-(1,2-dicarboxyethyl)-AMP + GDP + phosphate + 2 H(+). The protein operates within purine metabolism; AMP biosynthesis via de novo pathway; AMP from IMP: step 1/2. In terms of biological role, plays an important role in the de novo pathway of purine nucleotide biosynthesis. Catalyzes the first committed step in the biosynthesis of AMP from IMP. This is Adenylosuccinate synthetase from Chlorobium limicola (strain DSM 245 / NBRC 103803 / 6330).